A 442-amino-acid polypeptide reads, in one-letter code: Putative neutral sphingomyelinase (442 aa).

Glu-46 contributes to the Mg(2+) binding site. His-264 acts as the Proton acceptor in catalysis. Residues 309–330 (ALTGEDDQSSQHQPEIQCNGSS) are disordered. Polar residues predominate over residues 318–330 (SQHQPEIQCNGSS). 2 helical membrane-spanning segments follow: residues 362–384 (RILYYSAATFLFVLLVLLVEFTA) and 391–413 (IFLLLKFIVFGVILFCVFMASIW).

Belongs to the neutral sphingomyelinase family.

Its subcellular location is the membrane. The enzyme catalyses a sphingomyelin + H2O = phosphocholine + an N-acylsphing-4-enine + H(+). It participates in lipid metabolism; sphingolipid metabolism. The protein is Putative neutral sphingomyelinase of Drosophila melanogaster (Fruit fly).